Here is a 317-residue protein sequence, read N- to C-terminus: Pantothenate kinase (317 aa).

ATP is bound at residue 95-102 (GSVAVGKS).

It belongs to the prokaryotic pantothenate kinase family.

The protein resides in the cytoplasm. It catalyses the reaction (R)-pantothenate + ATP = (R)-4'-phosphopantothenate + ADP + H(+). It participates in cofactor biosynthesis; coenzyme A biosynthesis; CoA from (R)-pantothenate: step 1/5. In Rhodopseudomonas palustris (strain BisB18), this protein is Pantothenate kinase.